Reading from the N-terminus, the 387-residue chain is Queuine tRNA-ribosyltransferase (387 aa).

The Proton acceptor role is filled by Asp-93. Substrate-binding positions include Asp-93–Phe-97, Asp-147, Gln-190, and Gly-217. Residues Gly-248 to Asp-254 form an RNA binding region. Catalysis depends on Asp-267, which acts as the Nucleophile. The tract at residues Thr-272–Arg-276 is RNA binding; important for wobble base 34 recognition. The Zn(2+) site is built by Cys-305, Cys-307, Cys-310, and His-336.

The protein belongs to the queuine tRNA-ribosyltransferase family. Homodimer. Within each dimer, one monomer is responsible for RNA recognition and catalysis, while the other monomer binds to the replacement base PreQ1. It depends on Zn(2+) as a cofactor.

The enzyme catalyses 7-aminomethyl-7-carbaguanine + guanosine(34) in tRNA = 7-aminomethyl-7-carbaguanosine(34) in tRNA + guanine. The protein operates within tRNA modification; tRNA-queuosine biosynthesis. Functionally, catalyzes the base-exchange of a guanine (G) residue with the queuine precursor 7-aminomethyl-7-deazaguanine (PreQ1) at position 34 (anticodon wobble position) in tRNAs with GU(N) anticodons (tRNA-Asp, -Asn, -His and -Tyr). Catalysis occurs through a double-displacement mechanism. The nucleophile active site attacks the C1' of nucleotide 34 to detach the guanine base from the RNA, forming a covalent enzyme-RNA intermediate. The proton acceptor active site deprotonates the incoming PreQ1, allowing a nucleophilic attack on the C1' of the ribose to form the product. After dissociation, two additional enzymatic reactions on the tRNA convert PreQ1 to queuine (Q), resulting in the hypermodified nucleoside queuosine (7-(((4,5-cis-dihydroxy-2-cyclopenten-1-yl)amino)methyl)-7-deazaguanosine). The polypeptide is Queuine tRNA-ribosyltransferase (Gluconacetobacter diazotrophicus (strain ATCC 49037 / DSM 5601 / CCUG 37298 / CIP 103539 / LMG 7603 / PAl5)).